Here is a 316-residue protein sequence, read N- to C-terminus: Uracil-DNA glycosylase (316 aa).

Positions 36-79 (AAAAAPAGAGAGASKPARPSAAARPAKGTPAASAATTATGADAS) are enriched in low complexity. The tract at residues 36–91 (AAAAAPAGAGAGASKPARPSAAARPAKGTPAASAATTATGADASAPPPDPGAPTWD) is disordered. The active-site Proton acceptor is the D159.

This sequence belongs to the uracil-DNA glycosylase (UDG) superfamily. UNG family.

The protein localises to the host nucleus. The catalysed reaction is Hydrolyzes single-stranded DNA or mismatched double-stranded DNA and polynucleotides, releasing free uracil.. Excises uracil residues from the DNA which can arise as a result of misincorporation of dUMP residues by DNA polymerase or deamination of cytosines. Therefore may reduce deleterious uracil incorporation into the viral genome, particularly in terminally differentiated cells which lack DNA repair enzymes. The protein is Uracil-DNA glycosylase (UL2) of Sus scrofa (Pig).